A 33-amino-acid polypeptide reads, in one-letter code: Sucrose-6-phosphate hydrolase (33 aa).

15–18 (PLQE) is a substrate binding site. The active site involves Glu18.

This sequence belongs to the glycosyl hydrolase 32 family.

It carries out the reaction Hydrolysis of terminal non-reducing beta-D-fructofuranoside residues in beta-D-fructofuranosides.. The protein operates within glycan biosynthesis; sucrose metabolism. In Fusobacterium mortiferum, this protein is Sucrose-6-phosphate hydrolase.